The chain runs to 415 residues: Secernin-2 (415 aa).

Cys-8 is an active-site residue.

It belongs to the peptidase C69 family. Secernin subfamily.

This is Secernin-2 (scrn2) from Danio rerio (Zebrafish).